Here is a 76-residue protein sequence, read N- to C-terminus: ATP synthase subunit 9, mitochondrial (76 aa).

2 helical membrane-spanning segments follow: residues Ile14–Ile34 and Ile52–Leu72.

The protein belongs to the ATPase C chain family. F-type ATPases have 2 components, CF(1) - the catalytic core - and CF(0) - the membrane proton channel. CF(1) has five subunits: alpha(3), beta(3), gamma(1), delta(1), epsilon(1). CF(0) has three main subunits: a, b and c.

The protein resides in the mitochondrion membrane. Functionally, mitochondrial membrane ATP synthase (F(1)F(0) ATP synthase or Complex V) produces ATP from ADP in the presence of a proton gradient across the membrane which is generated by electron transport complexes of the respiratory chain. F-type ATPases consist of two structural domains, F(1) - containing the extramembraneous catalytic core and F(0) - containing the membrane proton channel, linked together by a central stalk and a peripheral stalk. During catalysis, ATP synthesis in the catalytic domain of F(1) is coupled via a rotary mechanism of the central stalk subunits to proton translocation. Part of the complex F(0) domain. A homomeric c-ring of probably 10 subunits is part of the complex rotary element. The sequence is that of ATP synthase subunit 9, mitochondrial (ATP9) from Wickerhamomyces canadensis (Yeast).